Consider the following 337-residue polypeptide: Protein EXORDIUM-like 3 (337 aa).

Positions 1–25 (MHSLPVNLVLTVLTVFLTSPAQVIG) are cleaved as a signal peptide. Residues Asn34, Asn66, and Asn119 are each glycosylated (N-linked (GlcNAc...) asparagine).

The protein belongs to the EXORDIUM family.

Its subcellular location is the secreted. It is found in the extracellular space. The protein resides in the apoplast. Its function is as follows. May play a role in a brassinosteroid-dependent regulation of growth and development. The chain is Protein EXORDIUM-like 3 (EXL3) from Arabidopsis thaliana (Mouse-ear cress).